The chain runs to 54 residues: Photosystem II reaction center protein K (54 aa).

A propeptide spanning residues 1 to 17 (MFQISLDMISNKINLLG) is cleaved from the precursor. The chain crosses the membrane as a helical span at residues 29–49 (IVDVLPIIPILFFLLAFVWQA).

It belongs to the PsbK family. PSII is composed of 1 copy each of membrane proteins PsbA, PsbB, PsbC, PsbD, PsbE, PsbF, PsbH, PsbI, PsbJ, PsbK, PsbL, PsbM, PsbT, PsbY, PsbZ, Psb30/Ycf12, at least 3 peripheral proteins of the oxygen-evolving complex and a large number of cofactors. It forms dimeric complexes.

It is found in the plastid. It localises to the chloroplast thylakoid membrane. Functionally, one of the components of the core complex of photosystem II (PSII). PSII is a light-driven water:plastoquinone oxidoreductase that uses light energy to abstract electrons from H(2)O, generating O(2) and a proton gradient subsequently used for ATP formation. It consists of a core antenna complex that captures photons, and an electron transfer chain that converts photonic excitation into a charge separation. This is Photosystem II reaction center protein K from Euglena stellata.